The sequence spans 346 residues: [LysW]-lysine/[LysW]-ornithine hydrolase (346 aa).

Position 68 (histidine 68) interacts with Zn(2+). Aspartate 70 is an active-site residue. Aspartate 92 provides a ligand contact to Zn(2+). Residue glutamate 122 is the Proton acceptor of the active site. 3 residues coordinate Zn(2+): glutamate 123, glutamate 146, and histidine 317.

It belongs to the peptidase M20A family. LysK subfamily. Requires Zn(2+) as cofactor. Co(2+) is required as a cofactor.

It is found in the cytoplasm. The enzyme catalyses [amino-group carrier protein]-C-terminal-gamma-(L-lysyl)-L-glutamate + H2O = [amino-group carrier protein]-C-terminal-L-glutamate + L-lysine. It catalyses the reaction [amino-group carrier protein]-C-terminal-gamma-(L-ornithyl)-L-glutamate + H2O = [amino-group carrier protein]-C-terminal-L-glutamate + L-ornithine. The protein operates within amino-acid biosynthesis; L-lysine biosynthesis via AAA pathway; L-lysine from L-alpha-aminoadipate (Thermus route): step 5/5. It participates in amino-acid biosynthesis; L-arginine biosynthesis. In terms of biological role, catalyzes the release of L-lysine from [LysW]-gamma-L-lysine and the release of L-ornithine from [LysW]-L-ornithine. The protein is [LysW]-lysine/[LysW]-ornithine hydrolase of Saccharolobus solfataricus (strain ATCC 35092 / DSM 1617 / JCM 11322 / P2) (Sulfolobus solfataricus).